The primary structure comprises 757 residues: MSGFDEGNVTVSGGGGKGGFKKNNGFVEDTSVRDLFKRFINEWKDQDNVFIYKEQLRQHYNLGWHYIEVSIDHLTDFNQELSGRFISSPNELMPSFEDAIKDIIKEMNYNKEQVDEDIQILFKSSANPEPIRYLRAGLISKLVKVQGIVISASRTQPKPSTMVVKCKNCQHTQTLHIRPGIVSSVLPQQCERGSNDAGKPCPNNPYVVLSDQSTFVNQQILKLQESPETIPTGEMPRHIILSLDKSLADKITPGTRIKVLGVLGIFEGGGKRREIAGGTIRTNYLRVLGITSDNAGRDSMHFTPSEEQSFKVFSRRQDLRNIIASSIAPSIYGHEDIKRAISCQLFGGSSKKLPDKMRLRGDINLLLLGDPGTAKSQLLKFVEKVAPISVYTSGKGSSAAGLTASVIREPSTGEYYLEGGAMVVADGGVVCIDEFDKMNVDDRVAIHEAMEQQTISIAKAGITTILNSRTSVLAAANPVYGRYNDAADDNINFQSTILSRFDLIFIVKDPKNEKRDFIISKHVINIHEKSSRSGGSGSVGNNTYDLSNTVVDDSHIGENEVTIQYLKKYIAYARSRISPRLSEDAVTTLKNHYVSVRAKSKEQEMINNGSYGGGGSKNSVETERKKRKNAIPITVRQLEAIIRISESLAKMSLSPIATNEHAKEAIRLFDISTFDAITTNNTVNETLTPERLENIRTAEKYLKDRVPIGSSIRIKDVRFQLSRSGLDHFTILKAVDILVGRDEFEFRNQKRTLFRKQ.

The MCM domain maps to Leu319 to Val523. The Arginine finger motif lies at Ser499–Asp502. The disordered stretch occupies residues Ile606–Lys625.

Belongs to the MCM family. Component of the MCM2-7 complex. The complex forms a toroidal hexameric ring with the proposed subunit order MCM2-MCM6-MCM4-MCM7-MCM3-MCM5 (By simililarity).

The protein resides in the nucleus. Its subcellular location is the cytoplasm. The protein localises to the cytosol. The catalysed reaction is ATP + H2O = ADP + phosphate + H(+). In terms of biological role, acts as a component of the MCM2-7 complex (MCM complex) which is the replicative helicase essential for 'once per cell cycle' DNA replication initiation and elongation in eukaryotic cells. Core component of CDC45-MCM-GINS (CMG) helicase, the molecular machine that unwinds template DNA during replication, and around which the replisome is built. The active ATPase sites in the MCM2-7 ring are formed through the interaction surfaces of two neighboring subunits such that a critical structure of a conserved arginine finger motif is provided in trans relative to the ATP-binding site of the Walker A box of the adjacent subunit. The six ATPase active sites, however, are likely to contribute differentially to the complex helicase activity. This chain is DNA replication licensing factor mcm5 (mcm5), found in Dictyostelium discoideum (Social amoeba).